A 397-amino-acid chain; its full sequence is Tryptophan synthase beta chain (397 aa).

Lysine 86 carries the post-translational modification N6-(pyridoxal phosphate)lysine.

Belongs to the TrpB family. As to quaternary structure, tetramer of two alpha and two beta chains. The cofactor is pyridoxal 5'-phosphate.

The catalysed reaction is (1S,2R)-1-C-(indol-3-yl)glycerol 3-phosphate + L-serine = D-glyceraldehyde 3-phosphate + L-tryptophan + H2O. It functions in the pathway amino-acid biosynthesis; L-tryptophan biosynthesis; L-tryptophan from chorismate: step 5/5. Its function is as follows. The beta subunit is responsible for the synthesis of L-tryptophan from indole and L-serine. In Edwardsiella ictaluri (strain 93-146), this protein is Tryptophan synthase beta chain.